Consider the following 67-residue polypeptide: Metallothionein-B (67 aa).

It belongs to the metallothionein superfamily. Type 4 family.

Metallothioneins have a high content of cysteine residues that bind various heavy metals. This Sphaerechinus granularis (Purple sea urchin) protein is Metallothionein-B.